Reading from the N-terminus, the 348-residue chain is Anthranilate phosphoribosyltransferase (348 aa).

Residues Gly-83, Gly-86–Asp-87, Thr-91, Asn-93–Thr-96, Lys-111–Ser-119, and Thr-123 each bind 5-phospho-alpha-D-ribose 1-diphosphate. Gly-83 is a binding site for anthranilate. Residue Ser-95 coordinates Mg(2+). Asn-114 lines the anthranilate pocket. Position 169 (Arg-169) interacts with anthranilate. Residues Asp-227 and Glu-228 each coordinate Mg(2+).

This sequence belongs to the anthranilate phosphoribosyltransferase family. Homodimer. Mg(2+) is required as a cofactor.

It catalyses the reaction N-(5-phospho-beta-D-ribosyl)anthranilate + diphosphate = 5-phospho-alpha-D-ribose 1-diphosphate + anthranilate. Its pathway is amino-acid biosynthesis; L-tryptophan biosynthesis; L-tryptophan from chorismate: step 2/5. In terms of biological role, catalyzes the transfer of the phosphoribosyl group of 5-phosphorylribose-1-pyrophosphate (PRPP) to anthranilate to yield N-(5'-phosphoribosyl)-anthranilate (PRA). The protein is Anthranilate phosphoribosyltransferase of Thermobifida fusca (strain YX).